Reading from the N-terminus, the 578-residue chain is Type I restriction enzyme MjaVIII methylase subunit (578 aa).

S-adenosyl-L-methionine-binding positions include 250–255 (EVYTPI), 280–282 (SGS), Glu303, and 332–333 (DS).

It belongs to the N(4)/N(6)-methyltransferase family. The type I restriction/modification system is composed of three polypeptides R, M and S.

It carries out the reaction a 2'-deoxyadenosine in DNA + S-adenosyl-L-methionine = an N(6)-methyl-2'-deoxyadenosine in DNA + S-adenosyl-L-homocysteine + H(+). In terms of biological role, the subtype gamma methyltransferase (M) subunit of a type I restriction enzyme. The M and S subunits together form a methyltransferase (MTase) that methylates A-2 on the top and A-3 on the bottom strand of the sequence 5'-GAYN(5)GTAA-3'. In the presence of the R subunit the complex can also act as an endonuclease, binding to the same target sequence but cutting the DNA some distance from this site. Whether the DNA is cut or modified depends on the methylation state of the target sequence. When the target site is unmodified, the DNA is cut. When the target site is hemimethylated, the complex acts as a maintenance MTase modifying the DNA so that both strands become methylated. After locating a non-methylated recognition site, the enzyme complex serves as a molecular motor that translocates DNA in an ATP-dependent manner until a collision occurs that triggers cleavage. The chain is Type I restriction enzyme MjaVIII methylase subunit from Methanocaldococcus jannaschii (strain ATCC 43067 / DSM 2661 / JAL-1 / JCM 10045 / NBRC 100440) (Methanococcus jannaschii).